The following is a 483-amino-acid chain: Aspartyl/glutamyl-tRNA(Asn/Gln) amidotransferase subunit B (483 aa).

Belongs to the GatB/GatE family. GatB subfamily. As to quaternary structure, heterotrimer of A, B and C subunits.

The enzyme catalyses L-glutamyl-tRNA(Gln) + L-glutamine + ATP + H2O = L-glutaminyl-tRNA(Gln) + L-glutamate + ADP + phosphate + H(+). It catalyses the reaction L-aspartyl-tRNA(Asn) + L-glutamine + ATP + H2O = L-asparaginyl-tRNA(Asn) + L-glutamate + ADP + phosphate + 2 H(+). Its function is as follows. Allows the formation of correctly charged Asn-tRNA(Asn) or Gln-tRNA(Gln) through the transamidation of misacylated Asp-tRNA(Asn) or Glu-tRNA(Gln) in organisms which lack either or both of asparaginyl-tRNA or glutaminyl-tRNA synthetases. The reaction takes place in the presence of glutamine and ATP through an activated phospho-Asp-tRNA(Asn) or phospho-Glu-tRNA(Gln). The sequence is that of Aspartyl/glutamyl-tRNA(Asn/Gln) amidotransferase subunit B from Rickettsia bellii (strain RML369-C).